The following is a 161-amino-acid chain: Protein OPG060 (161 aa).

Belongs to the orthopoxvirus OPG058 family.

The polypeptide is Protein OPG060 (OPG060) (Homo sapiens (Human)).